The primary structure comprises 346 residues: MRFREGPLGDLKVPLTWTAAVALIVAAVIGVAFLLADRRETLQEQAYGVTRQTVDTVARPVSGAIAAPGRWTGLGLDYVRSYFFTAHENRRLKAELAEMRQWRDRALALQDQNDRFKSLLGLRTDPPIPMAAARVVSDSRGPFANTRLADAGSERGIVVGNPVLNERGLVGRVVGVSRGVSRVLLLTDIASRTPVMIDRTNARAILTGDGGPNPKLDYLRGVDPIQQGDRVVTSGDGGVVPRGLPVGAAVKGLDGRWRVVLFADQASIDYVRILLFKDFAQLADEKQLQARSLPPVTTEDPQTSILSNPVSRPVAPTPSPATATPSAAPAARPATTATPPQTGAPR.

Positions 89-118 (NRRLKAELAEMRQWRDRALALQDQNDRFKS) form a coiled coil. Residues 292 to 346 (SLPPVTTEDPQTSILSNPVSRPVAPTPSPATATPSAAPAARPATTATPPQTGAPR) form a disordered region. Over residues 299-308 (EDPQTSILSN) the composition is skewed to polar residues. Low complexity predominate over residues 309–340 (PVSRPVAPTPSPATATPSAAPAARPATTATPP).

Belongs to the MreC family. Interacts with penicillin-binding proteins (PBP2, PBP1a, PBP1b, PBP2a and PBP2b). Interacts with outer membrane proteins belonging to the TonB-dependent receptor family of transport proteins.

Its subcellular location is the periplasm. In terms of biological role, involved in formation and maintenance of cell shape. Required for the spatial organization of components of the peptidoglycan-synthesizing holoenzyme in the periplasm and peptidoglycan synthetic activity. The sequence is that of Cell shape-determining protein MreC from Caulobacter vibrioides (strain NA1000 / CB15N) (Caulobacter crescentus).